The following is an 821-amino-acid chain: Probable phosphoenolpyruvate synthase (821 aa).

The active-site Tele-phosphohistidine intermediate is the H444. Substrate contacts are provided by R543, R590, E687, G709, T710, N711, and D712. Position 687 (E687) interacts with Mg(2+). Mg(2+) is bound at residue D712. The active-site Proton donor is C759.

This sequence belongs to the PEP-utilizing enzyme family. It depends on Mg(2+) as a cofactor.

It carries out the reaction pyruvate + ATP + H2O = phosphoenolpyruvate + AMP + phosphate + 2 H(+). It participates in carbohydrate biosynthesis; gluconeogenesis. Catalyzes the phosphorylation of pyruvate to phosphoenolpyruvate. In Pyrococcus horikoshii (strain ATCC 700860 / DSM 12428 / JCM 9974 / NBRC 100139 / OT-3), this protein is Probable phosphoenolpyruvate synthase (ppsA).